We begin with the raw amino-acid sequence, 185 residues long: Urease accessory protein UreE (185 aa).

A disordered region spans residues 153-185 (LRANSAQGHGHSHSHSHDHHGYHHHGDGNWHKH). A compositionally biased stretch (basic residues) spans 162–175 (GHSHSHSHDHHGYH). Positions 176 to 185 (HHGDGNWHKH) are enriched in basic and acidic residues.

This sequence belongs to the UreE family.

The protein resides in the cytoplasm. Its function is as follows. Involved in urease metallocenter assembly. Binds nickel. Probably functions as a nickel donor during metallocenter assembly. The chain is Urease accessory protein UreE from Haemophilus influenzae (strain PittGG).